A 123-amino-acid polypeptide reads, in one-letter code: Small ribosomal subunit protein uS12 (123 aa).

Asp-89 is modified (3-methylthioaspartic acid).

It belongs to the universal ribosomal protein uS12 family. As to quaternary structure, part of the 30S ribosomal subunit. Contacts proteins S8 and S17. May interact with IF1 in the 30S initiation complex.

In terms of biological role, with S4 and S5 plays an important role in translational accuracy. Its function is as follows. Interacts with and stabilizes bases of the 16S rRNA that are involved in tRNA selection in the A site and with the mRNA backbone. Located at the interface of the 30S and 50S subunits, it traverses the body of the 30S subunit contacting proteins on the other side and probably holding the rRNA structure together. The combined cluster of proteins S8, S12 and S17 appears to hold together the shoulder and platform of the 30S subunit. The sequence is that of Small ribosomal subunit protein uS12 from Sinorhizobium medicae (strain WSM419) (Ensifer medicae).